The primary structure comprises 255 residues: Hydroxyacylglutathione hydrolase (255 aa).

Zn(2+) is bound by residues histidine 56, histidine 58, aspartate 60, histidine 61, histidine 114, aspartate 133, and histidine 171.

It belongs to the metallo-beta-lactamase superfamily. Glyoxalase II family. In terms of assembly, monomer. Zn(2+) is required as a cofactor.

The catalysed reaction is an S-(2-hydroxyacyl)glutathione + H2O = a 2-hydroxy carboxylate + glutathione + H(+). The protein operates within secondary metabolite metabolism; methylglyoxal degradation; (R)-lactate from methylglyoxal: step 2/2. In terms of biological role, thiolesterase that catalyzes the hydrolysis of S-D-lactoyl-glutathione to form glutathione and D-lactic acid. The polypeptide is Hydroxyacylglutathione hydrolase (Rhodopseudomonas palustris (strain BisB18)).